A 213-amino-acid polypeptide reads, in one-letter code: Histone H1.2 (213 aa).

Over residues 1–17 (MSETAPAAPAAAPPAEK) the composition is skewed to low complexity. The tract at residues 1–41 (MSETAPAAPAAAPPAEKTPVKKKAAKKPAGARRKASGPPVS) is disordered. Position 2 is an N-acetylserine; partial (S2). S2 is subject to Phosphoserine. K17 is subject to N6-acetyllysine. The span at 20–35 (VKKKAAKKPAGARRKA) shows a compositional bias: basic residues. N6-(2-hydroxyisobutyryl)lysine is present on residues K23, K26, and K27. K34 carries the post-translational modification N6-(beta-hydroxybutyryl)lysine; alternate. At K34 the chain carries N6-crotonyllysine; alternate. K34 carries the post-translational modification N6-methyllysine; alternate. An H15 domain is found at 36–109 (SGPPVSELIT…GASGSFKLNK (74 aa)). K46 carries the post-translational modification N6-(2-hydroxyisobutyryl)lysine. Residue K52 is modified to N6-(beta-hydroxybutyryl)lysine; alternate. The residue at position 52 (K52) is an N6-(2-hydroxyisobutyryl)lysine; alternate. R54 bears the Citrulline mark. Residue K63 is modified to N6-(2-hydroxyisobutyryl)lysine. N6-(beta-hydroxybutyryl)lysine; alternate is present on K64. K64 bears the N6-crotonyllysine; alternate mark. N6-(2-hydroxyisobutyryl)lysine; alternate is present on K64. K75 and K81 each carry N6-(2-hydroxyisobutyryl)lysine. Residues K85 and K90 each carry the N6-(beta-hydroxybutyryl)lysine; alternate modification. N6-crotonyllysine; alternate occurs at positions 85, 90, and 97. Residues K85, K90, and K97 each carry the N6-(2-hydroxyisobutyryl)lysine; alternate modification. The interval 95-213 (QTKGTGASGS…KPKKAAPKKK (119 aa)) is disordered. Position 97 is an N6-succinyllysine; alternate (K97). Position 104 is a phosphoserine; by PKC (S104). At K106 the chain carries N6-(beta-hydroxybutyryl)lysine. N6-(2-hydroxyisobutyryl)lysine occurs at positions 110, 117, 121, 129, and 136. The span at 119-140 (KAKKAGAAKPKKAAGAAKKTKK) shows a compositional bias: basic residues. Position 146 is a phosphothreonine (T146). An N6-(2-hydroxyisobutyryl)lysine modification is found at K148. Over residues 149–160 (KTAKKTPKKAKK) the composition is skewed to basic residues. N6-crotonyllysine; alternate is present on residues K159 and K168. An N6-(2-hydroxyisobutyryl)lysine; alternate mark is found at K159 and K168. Residues 169 to 186 (KVAKSPKKAKAAKPKKAA) show a composition bias toward basic residues. Position 187 is an N6-methyllysine; by EHMT1 and EHMT2 (K187). S188 is modified (ADP-ribosylserine). Basic residues predominate over residues 193–213 (VKPKAAKPKVAKPKKAAPKKK).

Belongs to the histone H1/H5 family. H1 histones are progressively phosphorylated during the cell cycle, becoming maximally phosphorylated during late G2 phase and M phase, and being dephosphorylated sharply thereafter. In terms of processing, crotonylation (Kcr) is specifically present in male germ cells and marks testis-specific genes in post-meiotic cells, including X-linked genes that escape sex chromosome inactivation in haploid cells. Crotonylation marks active promoters and enhancers and confers resistance to transcriptional repressors. It is also associated with post-meiotically activated genes on autosomes. Post-translationally, ADP-ribosylated on Ser-188 in response to DNA damage. Citrullination at Arg-54 (H1R54ci) by PADI4 takes place within the DNA-binding site of H1 and results in its displacement from chromatin and global chromatin decondensation, thereby promoting pluripotency and stem cell maintenance.

It localises to the nucleus. Its subcellular location is the chromosome. Functionally, histone H1 protein binds to linker DNA between nucleosomes forming the macromolecular structure known as the chromatin fiber. Histones H1 are necessary for the condensation of nucleosome chains into higher-order structured fibers. Also acts as a regulator of individual gene transcription through chromatin remodeling, nucleosome spacing and DNA methylation. This Bos taurus (Bovine) protein is Histone H1.2.